A 391-amino-acid chain; its full sequence is MKFIDEALIRVEAGDGGNGCVSFRREKYIPKGGPDGGDGGDGGDVYLIADENLNTLIDYRFEKRYAAGRGENGRSAGCTGHRGNDITLRVPVGTRAIDNDTQEVIGDLTKHGMKMLVAKGGYHGLGNTRFKSSVNRAPRQKTNGTPGEKRDLLLELMLLADVGMLGLPNAGKSTFIRAVSAAKPKVADYPFTTLVPSLGVARVGADRSFVVADIPGLIEGAADGAGLGIRFLKHLERCRVLIHLVDIMPIDESDPAQNISVIESELYQYSEKLSEKPTWLVFNKIDTIGEEEAQARAQEIAEQIGWEGDYYLISAATGQNVQNLTRDIMDFIEANPREVAEENTEADEVKFKWDDYHQQAMQNPIEEDWDDFDDDWSEEDEEGVEFVYTRS.

An Obg domain is found at 1–159 (MKFIDEALIR…RDLLLELMLL (159 aa)). The 174-residue stretch at 160–333 (ADVGMLGLPN…LTRDIMDFIE (174 aa)) folds into the OBG-type G domain. GTP is bound by residues 166-173 (GLPNAGKS), 191-195 (FTTLV), 213-216 (DIPG), 283-286 (NKID), and 314-316 (SAA). Ser173 and Thr193 together coordinate Mg(2+).

This sequence belongs to the TRAFAC class OBG-HflX-like GTPase superfamily. OBG GTPase family. As to quaternary structure, monomer. It depends on Mg(2+) as a cofactor.

It localises to the cytoplasm. In terms of biological role, an essential GTPase which binds GTP, GDP and possibly (p)ppGpp with moderate affinity, with high nucleotide exchange rates and a fairly low GTP hydrolysis rate. Plays a role in control of the cell cycle, stress response, ribosome biogenesis and in those bacteria that undergo differentiation, in morphogenesis control. This Actinobacillus pleuropneumoniae serotype 7 (strain AP76) protein is GTPase Obg.